A 540-amino-acid polypeptide reads, in one-letter code: Probable tubulin polyglutamylase TTLL2 (540 aa).

Residues Leu-41–Cys-384 enclose the TTL domain. ATP is bound by residues Lys-169, Arg-175–Gly-176, Gln-197–Ile-200, and Lys-210–Asp-212. Position 175 (Arg-175) interacts with a protein. Arg-236 contributes to the L-glutamate binding site. Thr-255–Asn-256 lines the ATP pocket. L-glutamate-binding residues include Ser-258 and Lys-278. Residues Asp-330, Glu-343, and Asn-345 each contribute to the Mg(2+) site. Residue Lys-361 coordinates L-glutamate. A disordered region spans residues Ser-479–Thr-499.

It belongs to the tubulin--tyrosine ligase family. The cofactor is Mg(2+). Highly expressed in brain, kidney, liver and testis. Expressed in heart, lung, muscle and spleen.

In terms of biological role, probable tubulin polyglutamylase that generates side chains of glutamate on the gamma-carboxyl group of specific glutamate residues within the C-terminal tail of target proteins. Similar to TTLL1, may acquire enzymatic activity only in complex with other proteins as it is most likely lacking domains important for autonomous activity. Probably involved in the side-chain initiation step of the polyglutamylation reaction rather than the elongation step. The sequence is that of Probable tubulin polyglutamylase TTLL2 from Mus musculus (Mouse).